A 123-amino-acid chain; its full sequence is Large ribosomal subunit protein bL12 (123 aa).

Belongs to the bacterial ribosomal protein bL12 family. Homodimer. Part of the ribosomal stalk of the 50S ribosomal subunit. Forms a multimeric L10(L12)X complex, where L10 forms an elongated spine to which 2 to 4 L12 dimers bind in a sequential fashion. Binds GTP-bound translation factors.

Forms part of the ribosomal stalk which helps the ribosome interact with GTP-bound translation factors. Is thus essential for accurate translation. The chain is Large ribosomal subunit protein bL12 from Neisseria perflava.